A 305-amino-acid polypeptide reads, in one-letter code: ATP synthase subunit gamma, mitochondrial (305 aa).

This sequence belongs to the ATPase gamma chain family. F-type ATPases have 2 components, F(1) - the catalytic core - and F(o) - the membrane proton channel. F(1) has five subunits: alpha(3), beta(3), gamma(1), delta(1), epsilon(1), plus the additional subunit P18 (Tb427.05.1710) that is not present in F(1)F(o) ATP synthase from metazoa. Subunit P18 (Tb927.5.1710) interacts with the alpha subunit with a 1:1 stoichiometry; the interaction is direct. Subunit gamma is part of the central stalk. F(o) has three main subunits: a, b and c. The trypanosomal ATPase complex contains additional subunits that are not present in the F(1)F(o) ATP synthase from metazoa.

The protein localises to the mitochondrion. Its subcellular location is the mitochondrion inner membrane. Mitochondrial membrane ATP synthase (F(1)F(o) ATP synthase) produces ATP from ADP in the presence of a proton gradient across the membrane which is generated by electron transport complexes of the respiratory chain. F-type ATPases consist of two structural domains, F(1) - containing the extramembraneous catalytic core, and F(o) - containing the membrane proton channel, linked together by a central stalk and a peripheral stalk. During catalysis, ATP synthesis in the catalytic domain of F(1) is coupled via a rotary mechanism of the central stalk subunits to proton translocation. Subunits alpha and beta form the catalytic core in F(1). Rotation of the central stalk against the surrounding alpha(3)beta(3) subunits leads to hydrolysis of ATP in three separate catalytic sites on the beta subunits. Contrary to the procyclic, insect form that requires F(1)F(o) ATP synthase for ATP synthesis, the bloodstream form relies on ATP hydrolysis by F(1)F(o) ATP synthase to maintain its mitochondrial membrane potential. The chain is ATP synthase subunit gamma, mitochondrial from Trypanosoma brucei brucei.